Reading from the N-terminus, the 551-residue chain is Glucans biosynthesis protein D (551 aa).

Positions 1–32 form a signal peptide, tat-type signal; sequence MNRRRFIKASLALAAACGTPGLATLFSRNAWA.

It belongs to the OpgD/OpgG family. In terms of processing, predicted to be exported by the Tat system. The position of the signal peptide cleavage has not been experimentally proven.

It is found in the periplasm. The protein operates within glycan metabolism; osmoregulated periplasmic glucan (OPG) biosynthesis. Functionally, probably involved in the control of the structural glucose backbone of osmoregulated periplasmic glucans (OPGs). This Cronobacter sakazakii (strain ATCC BAA-894) (Enterobacter sakazakii) protein is Glucans biosynthesis protein D.